The sequence spans 302 residues: ATP synthase gamma chain (302 aa).

This sequence belongs to the ATPase gamma chain family. As to quaternary structure, F-type ATPases have 2 components, CF(1) - the catalytic core - and CF(0) - the membrane proton channel. CF(1) has five subunits: alpha(3), beta(3), gamma(1), delta(1), epsilon(1). CF(0) has three main subunits: a, b and c.

The protein resides in the cell membrane. Produces ATP from ADP in the presence of a proton gradient across the membrane. The gamma chain is believed to be important in regulating ATPase activity and the flow of protons through the CF(0) complex. This Enterococcus faecalis (strain ATCC 700802 / V583) protein is ATP synthase gamma chain.